The following is a 403-amino-acid chain: Tyrosine--tRNA ligase (403 aa).

The 'HIGH' region motif lies at 42 to 51; it reads PTAPDLHLGH. The 'KMSKS' region motif lies at 226–230; that stretch reads KMSKS. An ATP-binding site is contributed by Lys-229. Positions 336–396 constitute an S4 RNA-binding domain; it reads MPISAVLNKA…GKKAFGRVTL (61 aa).

It belongs to the class-I aminoacyl-tRNA synthetase family. TyrS type 2 subfamily. Homodimer.

The protein resides in the cytoplasm. The catalysed reaction is tRNA(Tyr) + L-tyrosine + ATP = L-tyrosyl-tRNA(Tyr) + AMP + diphosphate + H(+). Catalyzes the attachment of tyrosine to tRNA(Tyr) in a two-step reaction: tyrosine is first activated by ATP to form Tyr-AMP and then transferred to the acceptor end of tRNA(Tyr). The polypeptide is Tyrosine--tRNA ligase (Pseudomonas syringae pv. syringae (strain B728a)).